Reading from the N-terminus, the 699-residue chain is Bifunctional protein GAL10 (699 aa).

Residues 1–357 (MTAQLQSEST…TTENPFGYQL (357 aa)) are galactowaldenase. 13–44 (IVLVTGGAGYIGSHTVVELIENGYDCVVADNL) contributes to the NAD(+) binding site. Residues 358-699 (RGVEARFSAE…YGSKIVYRFS (342 aa)) form a mutarotase region. His537 (for mutarotase activity) is an active-site residue. Ser562 is subject to Phosphoserine.

It in the N-terminal section; belongs to the NAD(P)-dependent epimerase/dehydratase family. In the C-terminal section; belongs to the aldose epimerase family. NAD(+) is required as a cofactor.

It carries out the reaction UDP-alpha-D-glucose = UDP-alpha-D-galactose. The catalysed reaction is alpha-D-glucose = beta-D-glucose. It functions in the pathway carbohydrate metabolism; galactose metabolism. The protein operates within carbohydrate metabolism; hexose metabolism. Its function is as follows. Mutarotase converts alpha-aldose to the beta-anomer. It is active on D-glucose, L-arabinose, D-xylose, D-galactose, maltose and lactose. The polypeptide is Bifunctional protein GAL10 (GAL10) (Saccharomyces cerevisiae (strain ATCC 204508 / S288c) (Baker's yeast)).